A 703-amino-acid polypeptide reads, in one-letter code: WPP domain-interacting tail-anchored protein 1 (703 aa).

Basic and acidic residues predominate over residues 1–12 (METETEHDRTVS). 2 disordered regions span residues 1-27 (METETEHDRTVSVDDNDSLVPEPSSTK) and 86-107 (FVSKKEEDEEEPSSNVDDDDDS). A compositionally biased stretch (acidic residues) spans 92–107 (EDEEEPSSNVDDDDDS). Residues 118–183 (SSILNSEVKE…MEQVVEMKKQ (66 aa)) are a coiled coil. The disordered stretch occupies residues 189-208 (RLSSGLDEQGSWSGGQTSVS). The span at 198–208 (GSWSGGQTSVS) shows a compositional bias: polar residues. 3 coiled-coil regions span residues 236 to 265 (LEKSLAKEMELEKKLSESRNTERELEMKLY), 318 to 461 (KRED…RDKG), and 500 to 604 (STVS…SREN). Residues 679 to 699 (FKHILVAILVILISSIAYVIS) traverse the membrane as a helical segment.

Homodimer. Component of Ran complexes at least composed of WIT1 or WIT2, RANGAP1 or RANGAP2, and WIP1 or WIP2 or WIP3. Interacts with WIP2, WPP1/MAF1, WPP2/MAF2, RANGAP1 and RANGAP2. Component of a ternary complex composed of WPP1, HSP70-1 and WIT1. Interacts with KAKU1. Interacts with WIP1. In terms of tissue distribution, ubiquitous.

It is found in the nucleus envelope. Its subcellular location is the nucleus membrane. Functionally, together with WIT2, required for the nuclear envelope docking of RANGAP proteins in root tips. The polypeptide is WPP domain-interacting tail-anchored protein 1 (WIT1) (Arabidopsis thaliana (Mouse-ear cress)).